The primary structure comprises 370 residues: GTPase Obg (370 aa).

Residues 1 to 159 (MKFIDEARIE…RMLKLELKVL (159 aa)) form the Obg domain. Residues 128–147 (LHFKSSTNRAPRQKTDGKPG) form a disordered region. The OBG-type G domain occupies 160–334 (ADVGLLGMPN…LCYAIYDYLS (175 aa)). Residues 166–173 (GMPNAGKS), 191–195 (FTTLA), 213–216 (DIPG), 284–287 (NKLD), and 315–317 (SAL) contribute to the GTP site. S173 and T193 together coordinate Mg(2+).

It belongs to the TRAFAC class OBG-HflX-like GTPase superfamily. OBG GTPase family. Monomer. It depends on Mg(2+) as a cofactor.

It is found in the cytoplasm. An essential GTPase which binds GTP, GDP and possibly (p)ppGpp with moderate affinity, with high nucleotide exchange rates and a fairly low GTP hydrolysis rate. Plays a role in control of the cell cycle, stress response, ribosome biogenesis and in those bacteria that undergo differentiation, in morphogenesis control. In Burkholderia orbicola (strain MC0-3), this protein is GTPase Obg.